A 304-amino-acid chain; its full sequence is Probable cobalamin biosynthesis protein CobD (304 aa).

5 consecutive transmembrane segments (helical) span residues 2-22 (IVVL…KEYI), 50-70 (ILFS…AVYL), 73-93 (FILV…FSIT), 147-167 (VDGY…GAFI), and 284-304 (AAYS…AVFL).

Belongs to the CobD/CbiB family.

It localises to the cell membrane. It functions in the pathway cofactor biosynthesis; adenosylcobalamin biosynthesis. Converts cobyric acid to cobinamide by the addition of aminopropanol on the F carboxylic group. The protein is Probable cobalamin biosynthesis protein CobD of Thermoplasma volcanium (strain ATCC 51530 / DSM 4299 / JCM 9571 / NBRC 15438 / GSS1).